The chain runs to 483 residues: Glucose-1-phosphate adenylyltransferase large subunit 3, chloroplastic/amyloplastic (483 aa).

It belongs to the bacterial/plant glucose-1-phosphate adenylyltransferase family. As to quaternary structure, heterotetramer. As to expression, tubers.

It is found in the plastid. The protein resides in the chloroplast. It localises to the amyloplast. The enzyme catalyses alpha-D-glucose 1-phosphate + ATP + H(+) = ADP-alpha-D-glucose + diphosphate. The protein operates within glycan biosynthesis; starch biosynthesis. Its activity is regulated as follows. Activated by 3'phosphoglycerate, inhibited by orthophosphate. Allosteric regulation. This protein plays a role in synthesis of starch. It catalyzes the synthesis of the activated glycosyl donor, ADP-glucose from Glc-1-P and ATP. This chain is Glucose-1-phosphate adenylyltransferase large subunit 3, chloroplastic/amyloplastic (AGPS3), found in Solanum tuberosum (Potato).